The following is a 175-amino-acid chain: MRCVKALQLTLAVIKPDAMAHPLILEALHQKILENFIIIRKKDLIWRKADSEMFYAEHSGRFFFQRLVEFMSSGPMRAYILAREDAITHWRTMMGPTKVFRARFSSPETLRGKYGLTDTRNTTHGSDSIESAKREISFFFPEFSAEEWMMREEPHFRLGHTEYNEESQIHTVKHT.

6 residues coordinate ATP: K15, F63, R91, T97, R111, and N121. H124 acts as the Pros-phosphohistidine intermediate in catalysis.

Belongs to the NDK family. It depends on Mg(2+) as a cofactor.

The enzyme catalyses a 2'-deoxyribonucleoside 5'-diphosphate + ATP = a 2'-deoxyribonucleoside 5'-triphosphate + ADP. It catalyses the reaction a ribonucleoside 5'-diphosphate + ATP = a ribonucleoside 5'-triphosphate + ADP. Major role in the synthesis of nucleoside triphosphates other than ATP. The ATP gamma phosphate is transferred to the NDP beta phosphate via a ping-pong mechanism, using a phosphorylated active-site intermediate. The sequence is that of Nucleoside diphosphate kinase 6 (nme6) from Danio rerio (Zebrafish).